The primary structure comprises 370 residues: Myomodulin neuropeptides 1 (370 aa).

The signal sequence occupies residues 1-18 (MQVYMLLPLAVFASLTYQ). Positions 19-50 (GACEETAAAQTSSDASTSSASSEHAENELSRA) are excised as a propeptide. Positions 28-40 (QTSSDASTSSASS) are enriched in low complexity. Residues 28 to 52 (QTSSDASTSSASSEHAENELSRAKR) form a disordered region. Leucine amide is present on residues Leu60 and Leu69. The propeptide occupies 73-190 (GGPVEPESEE…EPEEGGLGEE (118 aa)). Leu199 and Leu209 each carry leucine amide. Residues 210-226 (GKREGEEGDEMDKKQDE) show a composition bias toward basic and acidic residues. The tract at residues 210 to 230 (GKREGEEGDEMDKKQDESLND) is disordered. A propeptide spanning residues 213-237 (EGEEGDEMDKKQDESLNDDFENDDI) is cleaved from the precursor. Leucine amide is present on residues Leu246, Leu256, Leu266, Leu276, Leu286, Leu296, Leu306, Leu316, Leu326, Leu336, and Leu346. The disordered stretch occupies residues 344-370 (LRLGKRDDDEKEKKSLNMSRLGKRSTQ). Over residues 347–358 (GKRDDDEKEKKS) the composition is skewed to basic and acidic residues. A propeptide spanning residues 350–355 (DDDEKE) is cleaved from the precursor. Leu364 carries the leucine amide modification. A propeptide spanning residues 368–370 (STQ) is cleaved from the precursor.

As to expression, expressed in all ganglia of the CNS, but only in a subset of neurons including L10 in the abdominal ganglion and B16 in the buccal ganglion.

It localises to the secreted. Its function is as follows. Exogenous application of myomodulins potentiates ARC muscle contraction. This chain is Myomodulin neuropeptides 1 (MYOMOD1), found in Aplysia californica (California sea hare).